We begin with the raw amino-acid sequence, 466 residues long: Gamma-glutamylpolyamine synthetase GlnA3 (466 aa).

A GS catalytic domain is found at 127–466 (GRTVLRRIVA…GVAAAYRWKY (340 aa)). Residues Glu151 and Glu153 each coordinate Mg(2+). Glu202 is an ATP binding site. Glu207 and Glu214 together coordinate Mg(2+). Residue Gly259 coordinates L-glutamate. His263 lines the Mg(2+) pocket. Ser267 provides a ligand contact to ATP. Residues Arg316 and Arg334 each coordinate L-glutamate. ATP contacts are provided by Arg334 and Arg339. Residue Glu355 coordinates Mg(2+).

The protein belongs to the glutamine synthetase family. Mg(2+) serves as cofactor. In terms of tissue distribution, expressed in mycelium.

The catalysed reaction is spermine + L-glutamate + ATP = gamma-L-glutamylspermine + ADP + phosphate + H(+). It catalyses the reaction spermidine + L-glutamate + ATP = gamma-L-glutamylspermidine + ADP + phosphate + H(+). The enzyme catalyses putrescine + L-glutamate + ATP = gamma-L-glutamylputrescine + ADP + phosphate + H(+). It carries out the reaction cadaverine + L-glutamate + ATP = gamma-L-glutamylcadaverine + ADP + phosphate + H(+). It participates in amine and polyamine degradation; putrescine degradation. It functions in the pathway amine and polyamine degradation; spermidine degradation. Its pathway is amine and polyamine degradation; spermine degradation. In terms of biological role, involved in the catabolism of polyamines. Catalyzes the ATP-dependent gamma-glutamylation of polyamines. Substrates include putrescine, cadaverine, spermidine and spermine, with a preference for long-chain polyamines spermidine and spermine. Is not able to compensate for the loss of glutamine synthetases (GSs). No complementation of the L-glutamine auxotrophy of an E.coli glnA mutant. Involved in morphological differentiation and in the production of secondary metabolites. Together with GlnA2, enables survival of S.coelicolor under exposure to high local environmental polyamine concentrations, which is toxic to the cells. This Streptomyces coelicolor (strain ATCC BAA-471 / A3(2) / M145) protein is Gamma-glutamylpolyamine synthetase GlnA3.